The following is a 545-amino-acid chain: CTP synthase (545 aa).

The amidoligase domain stretch occupies residues 1–266 (MTTRYIFVTG…DELVTKRFGI (266 aa)). Ser14 contacts CTP. Ser14 lines the UTP pocket. ATP contacts are provided by residues 15–20 (SLGKGI) and Asp72. Residues Asp72 and Glu140 each contribute to the Mg(2+) site. Residues 147–149 (DIE), 187–192 (KTKPTQ), and Lys223 contribute to the CTP site. Residues 187-192 (KTKPTQ) and Lys223 each bind UTP. Position 239–241 (239–241 (KDV)) interacts with ATP. The 252-residue stretch at 291–542 (TIGMVGKYIE…VAAAAAHQKR (252 aa)) folds into the Glutamine amidotransferase type-1 domain. An L-glutamine-binding site is contributed by Gly352. Cys379 (nucleophile; for glutamine hydrolysis) is an active-site residue. L-glutamine-binding positions include 380-383 (LGMQ), Glu403, and Arg470. Catalysis depends on residues His515 and Glu517.

The protein belongs to the CTP synthase family. In terms of assembly, homotetramer.

It catalyses the reaction UTP + L-glutamine + ATP + H2O = CTP + L-glutamate + ADP + phosphate + 2 H(+). The catalysed reaction is L-glutamine + H2O = L-glutamate + NH4(+). It carries out the reaction UTP + NH4(+) + ATP = CTP + ADP + phosphate + 2 H(+). It functions in the pathway pyrimidine metabolism; CTP biosynthesis via de novo pathway; CTP from UDP: step 2/2. Its activity is regulated as follows. Allosterically activated by GTP, when glutamine is the substrate; GTP has no effect on the reaction when ammonia is the substrate. The allosteric effector GTP functions by stabilizing the protein conformation that binds the tetrahedral intermediate(s) formed during glutamine hydrolysis. Inhibited by the product CTP, via allosteric rather than competitive inhibition. Catalyzes the ATP-dependent amination of UTP to CTP with either L-glutamine or ammonia as the source of nitrogen. Regulates intracellular CTP levels through interactions with the four ribonucleotide triphosphates. This chain is CTP synthase, found in Shewanella woodyi (strain ATCC 51908 / MS32).